Reading from the N-terminus, the 117-residue chain is Type II secretion system protein I (117 aa).

Residues 1–6 (MKSKRG) constitute a propeptide, leader sequence. Position 7 is an N-methylphenylalanine (F7). A helical membrane pass occupies residues 7 to 27 (FTLLEVLVALAIFATAAISVI).

It belongs to the GSP I family. In terms of assembly, type II secretion is composed of four main components: the outer membrane complex, the inner membrane complex, the cytoplasmic secretion ATPase and the periplasm-spanning pseudopilus. Interacts with core component EpsG. Cleaved by prepilin peptidase. In terms of processing, methylated by prepilin peptidase at the amino group of the N-terminal phenylalanine once the leader sequence is cleaved by prepilin peptidase.

The protein resides in the cell inner membrane. In terms of biological role, component of the type II secretion system required for the energy-dependent secretion of extracellular factors such as proteases and toxins from the periplasm. Part of the pseudopilus tip complex that is critical for the recognition and binding of secretion substrates. This is Type II secretion system protein I (epsI) from Vibrio cholerae serotype O1 (strain ATCC 39315 / El Tor Inaba N16961).